The primary structure comprises 338 residues: UDP-3-O-acylglucosamine N-acyltransferase (338 aa).

The active-site Proton acceptor is histidine 239.

It belongs to the transferase hexapeptide repeat family. LpxD subfamily. In terms of assembly, homotrimer.

It carries out the reaction a UDP-3-O-[(3R)-3-hydroxyacyl]-alpha-D-glucosamine + a (3R)-hydroxyacyl-[ACP] = a UDP-2-N,3-O-bis[(3R)-3-hydroxyacyl]-alpha-D-glucosamine + holo-[ACP] + H(+). Its pathway is bacterial outer membrane biogenesis; LPS lipid A biosynthesis. Functionally, catalyzes the N-acylation of UDP-3-O-acylglucosamine using 3-hydroxyacyl-ACP as the acyl donor. Is involved in the biosynthesis of lipid A, a phosphorylated glycolipid that anchors the lipopolysaccharide to the outer membrane of the cell. This chain is UDP-3-O-acylglucosamine N-acyltransferase, found in Xylella fastidiosa (strain M12).